Reading from the N-terminus, the 353-residue chain is GTPase Obg (353 aa).

The region spanning 1–159 (MKFLDEAKVY…RWIWLRLKLI (159 aa)) is the Obg domain. The region spanning 160-327 (ADAGLVGLPN…ALRALAAVIG (168 aa)) is the OBG-type G domain. GTP-binding positions include 166-173 (GLPNAGKS), 191-195 (FTTLH), 212-215 (DIPG), 279-282 (NKID), and 308-310 (SGI). Mg(2+)-binding residues include Ser173 and Thr193. Residues 332 to 353 (SDKAKGAADNAANAEPWAPQDA) form a disordered region.

The protein belongs to the TRAFAC class OBG-HflX-like GTPase superfamily. OBG GTPase family. Monomer. It depends on Mg(2+) as a cofactor.

The protein localises to the cytoplasm. In terms of biological role, an essential GTPase which binds GTP, GDP and possibly (p)ppGpp with moderate affinity, with high nucleotide exchange rates and a fairly low GTP hydrolysis rate. Plays a role in control of the cell cycle, stress response, ribosome biogenesis and in those bacteria that undergo differentiation, in morphogenesis control. The protein is GTPase Obg of Rhodopseudomonas palustris (strain HaA2).